The following is a 445-amino-acid chain: Phosphoglucosamine mutase (445 aa).

Catalysis depends on serine 102, which acts as the Phosphoserine intermediate. Residues serine 102, aspartate 241, aspartate 243, and aspartate 245 each coordinate Mg(2+). Serine 102 is modified (phosphoserine).

Belongs to the phosphohexose mutase family. Requires Mg(2+) as cofactor. Activated by phosphorylation.

It carries out the reaction alpha-D-glucosamine 1-phosphate = D-glucosamine 6-phosphate. Its function is as follows. Catalyzes the conversion of glucosamine-6-phosphate to glucosamine-1-phosphate. This is Phosphoglucosamine mutase from Cronobacter sakazakii (strain ATCC BAA-894) (Enterobacter sakazakii).